A 205-amino-acid chain; its full sequence is Holliday junction branch migration complex subunit RuvA (205 aa).

Residues 1 to 64 (MIGRLRGIIL…EDAQLLFGFN (64 aa)) are domain I. The domain II stretch occupies residues 65-143 (DKQERALFRE…GLSGDLFNSV (79 aa)). Residues 144–156 (SDIPLTSPANVDN) form a flexible linker region. The domain III stretch occupies residues 157–205 (RVGEPEAEAAAALVALGYKPQEASRMISKIARPDADCETLIRDALRAAL).

This sequence belongs to the RuvA family. Homotetramer. Forms an RuvA(8)-RuvB(12)-Holliday junction (HJ) complex. HJ DNA is sandwiched between 2 RuvA tetramers; dsDNA enters through RuvA and exits via RuvB. An RuvB hexamer assembles on each DNA strand where it exits the tetramer. Each RuvB hexamer is contacted by two RuvA subunits (via domain III) on 2 adjacent RuvB subunits; this complex drives branch migration. In the full resolvosome a probable DNA-RuvA(4)-RuvB(12)-RuvC(2) complex forms which resolves the HJ.

It localises to the cytoplasm. The RuvA-RuvB-RuvC complex processes Holliday junction (HJ) DNA during genetic recombination and DNA repair, while the RuvA-RuvB complex plays an important role in the rescue of blocked DNA replication forks via replication fork reversal (RFR). RuvA specifically binds to HJ cruciform DNA, conferring on it an open structure. The RuvB hexamer acts as an ATP-dependent pump, pulling dsDNA into and through the RuvAB complex. HJ branch migration allows RuvC to scan DNA until it finds its consensus sequence, where it cleaves and resolves the cruciform DNA. The sequence is that of Holliday junction branch migration complex subunit RuvA from Pectobacterium atrosepticum (strain SCRI 1043 / ATCC BAA-672) (Erwinia carotovora subsp. atroseptica).